Reading from the N-terminus, the 205-residue chain is Large ribosomal subunit protein uL4 (205 aa).

Positions 43-95 (RSGNRAQKDRAEVKHSTKKPWRQKGTGRARAGMTSSPLWRGGGRAFPNSPEEN) are disordered. Over residues 48–57 (AQKDRAEVKH) the composition is skewed to basic and acidic residues. The span at 58-69 (STKKPWRQKGTG) shows a compositional bias: basic residues.

Belongs to the universal ribosomal protein uL4 family. As to quaternary structure, part of the 50S ribosomal subunit.

One of the primary rRNA binding proteins, this protein initially binds near the 5'-end of the 23S rRNA. It is important during the early stages of 50S assembly. It makes multiple contacts with different domains of the 23S rRNA in the assembled 50S subunit and ribosome. Functionally, forms part of the polypeptide exit tunnel. This chain is Large ribosomal subunit protein uL4, found in Bordetella bronchiseptica (strain ATCC BAA-588 / NCTC 13252 / RB50) (Alcaligenes bronchisepticus).